The chain runs to 677 residues: Electrogenic aspartate/glutamate antiporter SLC25A12, mitochondrial (677 aa).

Position 2 is an N-acetylalanine (Ala-2). Positions 2–294 (AVKVHTTKRG…TLADIERIAP (293 aa)) are regulatory N-terminal domain. Topologically, residues 2–329 (AVKVHTTKRG…WLQIAESAYR (328 aa)) are mitochondrial intermembrane. EF-hand domains lie at 40-85 (VQRY…SVLC), 86-121 (APDSMFIVAFQLFDKSGNGEVTFENVKEIFGQTIIH), 122-156 (HHIPFNWDCEFIRLHFGHNRKKHLNYVEFTQFLQE), and 157-192 (LQLEHARQAFALKDKSKSGMISGLDFSDVMVTIRSH). Ca(2+) contacts are provided by Asp-65, Thr-67, Asp-69, Leu-71, and Glu-76. Residues 295-310 (LAEGALPYNLAELQRQ) form a linker loop domain region. A carrier domain region spans residues 320–612 (WLQIAESAYR…RWFYIDFGGL (293 aa)). Solcar repeat units lie at residues 324-416 (AESA…VRDK), 424-508 (IPLP…CKLL), and 516-604 (VGGI…LQRW). The chain crosses the membrane as a helical span at residues 330-347 (FTLGSVAGAVGATAVYPI). The Mitochondrial matrix portion of the chain corresponds to 348-390 (DLVKTRMQNQRGTGSVVGELMYKNSFDCFKKVLRYEGFFGLYR). The chain crosses the membrane as a helical span at residues 391–410 (GLIPQLIGVAPEKAIKLTVN). Topologically, residues 411-433 (DFVRDKFTKRDGSIPLPAEILAG) are mitochondrial intermembrane. A helical membrane pass occupies residues 434-447 (GCAGGSQVIFTNPL). Topologically, residues 448–482 (EIVKIRLQVAGEITTGPRVSALNVLQDLGLFGLYK) are mitochondrial matrix. Residues 483–502 (GAKACFLRDIPFSAIYFPVY) traverse the membrane as a helical segment. Residues 503–521 (AHCKLLLADENGRVGGINL) are Mitochondrial intermembrane-facing. A helical transmembrane segment spans residues 522 to 539 (LTAGALAGVPAASLVTPA). Topologically, residues 540-578 (DVIKTRLQVAARAGQTTYSGVVDCFRKILREEGPSAFWK) are mitochondrial matrix. The chain crosses the membrane as a helical span at residues 579–598 (GTAARVFRSSPQFGVTLVTY). Over 599–677 (ELLQRWFYID…AQPKAAAAAQ (79 aa)) the chain is Mitochondrial intermembrane. The interval 613 to 677 (KPSGSEPTPK…AQPKAAAAAQ (65 aa)) is C-terminal domain.

It belongs to the mitochondrial carrier (TC 2.A.29) family. Homodimer (via N-terminus).

It localises to the mitochondrion inner membrane. It catalyses the reaction L-aspartate(in) + L-glutamate(out) + H(+)(out) = L-aspartate(out) + L-glutamate(in) + H(+)(in). The catalysed reaction is 3-sulfino-L-alanine(out) + L-glutamate(in) + H(+)(in) = 3-sulfino-L-alanine(in) + L-glutamate(out) + H(+)(out). It carries out the reaction 3-sulfino-L-alanine(out) + L-aspartate(in) = 3-sulfino-L-alanine(in) + L-aspartate(out). Its function is as follows. Mitochondrial electrogenic aspartate/glutamate antiporter that favors efflux of aspartate and entry of glutamate and proton within the mitochondria as part of the malate-aspartate shuttle. Also mediates the uptake of L-cysteinesulfinate (3-sulfino-L-alanine) by mitochondria in exchange of L-glutamate and proton. Can also exchange L-cysteinesulfinate with aspartate in their anionic form without any proton translocation. Lacks transport activity towards L-glutamine or gamma-aminobutyric acid (GABA). This Mus musculus (Mouse) protein is Electrogenic aspartate/glutamate antiporter SLC25A12, mitochondrial.